The following is a 456-amino-acid chain: Adenylosuccinate synthetase isozyme 2 (456 aa).

The disordered stretch occupies residues 1-24 (MAFAETYPAASSLPNGDCGRPRAR). GTP-binding positions include 39 to 45 (GDEGKGK) and 67 to 69 (GHT). The active-site Proton acceptor is aspartate 40. Mg(2+) contacts are provided by aspartate 40 and glycine 67. Aspartate 40 contacts substrate. IMP contacts are provided by residues 40 to 43 (DEGK), 65 to 68 (NAGH), threonine 162, arginine 176, asparagine 255, threonine 270, and arginine 334. The Proton donor role is filled by histidine 68. 330–336 (VTTGRKR) is a substrate binding site. Residues arginine 336, 362-364 (KLD), and 444-447 (GVGK) contribute to the GTP site.

It belongs to the adenylosuccinate synthetase family. As to quaternary structure, homodimer. The cofactor is Mg(2+).

The protein localises to the cytoplasm. It localises to the mitochondrion. The catalysed reaction is IMP + L-aspartate + GTP = N(6)-(1,2-dicarboxyethyl)-AMP + GDP + phosphate + 2 H(+). Its pathway is purine metabolism; AMP biosynthesis via de novo pathway; AMP from IMP: step 1/2. Its activity is regulated as follows. Inhibited competitively by AMP and IMP and non-competitively by fructose 1,6-bisphosphate. Plays an important role in the de novo pathway and in the salvage pathway of purine nucleotide biosynthesis. Catalyzes the first committed step in the biosynthesis of AMP from IMP. The protein is Adenylosuccinate synthetase isozyme 2 of Homo sapiens (Human).